The following is a 265-amino-acid chain: Hydroxyethylthiazole kinase (265 aa).

Residue Met-55 coordinates substrate. ATP contacts are provided by Arg-130 and Ser-176. Gly-203 contributes to the substrate binding site.

The protein belongs to the Thz kinase family. Requires Mg(2+) as cofactor.

It carries out the reaction 5-(2-hydroxyethyl)-4-methylthiazole + ATP = 4-methyl-5-(2-phosphooxyethyl)-thiazole + ADP + H(+). Its pathway is cofactor biosynthesis; thiamine diphosphate biosynthesis; 4-methyl-5-(2-phosphoethyl)-thiazole from 5-(2-hydroxyethyl)-4-methylthiazole: step 1/1. In terms of biological role, catalyzes the phosphorylation of the hydroxyl group of 4-methyl-5-beta-hydroxyethylthiazole (THZ). This is Hydroxyethylthiazole kinase from Leptospira interrogans serogroup Icterohaemorrhagiae serovar copenhageni (strain Fiocruz L1-130).